Consider the following 62-residue polypeptide: Large ribosomal subunit protein uL30 (62 aa).

It belongs to the universal ribosomal protein uL30 family. In terms of assembly, part of the 50S ribosomal subunit.

The protein is Large ribosomal subunit protein uL30 of Polynucleobacter asymbioticus (strain DSM 18221 / CIP 109841 / QLW-P1DMWA-1) (Polynucleobacter necessarius subsp. asymbioticus).